The chain runs to 251 residues: Tungstate/molybdate/chromate-binding protein ModA (251 aa).

The first 23 residues, 1 to 23, serve as a signal peptide directing secretion; that stretch reads MTTRLPQLLLALLASAVSLAASA. Residues Thr60 and Ile168 each contribute to the molybdate site.

It belongs to the bacterial solute-binding protein ModA family. The complex is composed of two ATP-binding proteins (ModC), two transmembrane proteins (ModB) and a solute-binding protein (ModA).

The protein localises to the periplasm. Its function is as follows. Part of the ABC transporter complex ModABC involved in the transport of molybdenum into the cell. Binds tungstate and molybdate. Can also bind chromate, with lower affinity. Plays an essential role in recruitment of molybdate for nitrate reduction. This chain is Tungstate/molybdate/chromate-binding protein ModA, found in Pseudomonas aeruginosa (strain ATCC 15692 / DSM 22644 / CIP 104116 / JCM 14847 / LMG 12228 / 1C / PRS 101 / PAO1).